Consider the following 131-residue polypeptide: Small ribosomal subunit protein uS11 (131 aa).

It belongs to the universal ribosomal protein uS11 family. Part of the 30S ribosomal subunit. Interacts with proteins S7 and S18. Binds to IF-3.

In terms of biological role, located on the platform of the 30S subunit, it bridges several disparate RNA helices of the 16S rRNA. Forms part of the Shine-Dalgarno cleft in the 70S ribosome. This chain is Small ribosomal subunit protein uS11, found in Bacillus pumilus (strain SAFR-032).